A 299-amino-acid polypeptide reads, in one-letter code: UPF0603 protein OsI_019212, chloroplastic (299 aa).

Composition is skewed to low complexity over residues 1–14 (METL…LSPL) and 22–36 (ASPA…SSPA). A chloroplast-targeting transit peptide spans 1–41 (METLLSPSTLLSPLRGSKKKPASPAASASSSSSSPARSVVS). Disordered stretches follow at residues 1–60 (METL…WRGD) and 244–265 (PDPG…TKEE). The transit peptide at 42 to 98 (CALRRQQPPPQAVAAWRGDGGRGGGVGSWATFLQHGLAAAALSLAISMAPAPAPAVA) directs the protein to the thylakoid. The segment covering 252–265 (KDNKRESNFKTKEE) has biased composition (basic and acidic residues). The helical transmembrane segment at 276 to 296 (VVGGLLVIAFVVPMAQYYAYI) threads the bilayer.

This sequence belongs to the UPF0603 family.

The protein localises to the plastid. The protein resides in the chloroplast thylakoid membrane. The protein is UPF0603 protein OsI_019212, chloroplastic of Oryza sativa subsp. indica (Rice).